Here is a 187-residue protein sequence, read N- to C-terminus: uncharacterized protein (187 aa).

Over residues 139-168 (ESKDRKALKNAARKAEKNAHEESSYFRVDD) the composition is skewed to basic and acidic residues. Residues 139-172 (ESKDRKALKNAARKAEKNAHEESSYFRVDDPEPE) are disordered.

This is an uncharacterized protein from Caenorhabditis elegans.